Reading from the N-terminus, the 403-residue chain is 5,7-dihydroxy-2-methylchromone synthase (403 aa).

Histidine 68 contacts CoA. Residue cysteine 174 is part of the active site. Cysteine 174 bears the Cysteine sulfinic acid (-SO2H) mark. CoA-binding positions include leucine 277, serine 281, and 318-321 (GGRA).

This sequence belongs to the thiolase-like superfamily. Chalcone/stilbene synthases family. Homodimer.

The catalysed reaction is 5 malonyl-CoA + 4 H(+) = 5,7-dihydroxy-2-methyl-4H-chromen-4-one + 5 CO2 + 5 CoA + H2O. It participates in secondary metabolite biosynthesis; flavonoid biosynthesis. Catalyzes the iterative condensations of 5 molecules of malonyl-CoA to produce a pentaketide 5,7-dihydroxy-2-methylchromone. This chain is 5,7-dihydroxy-2-methylchromone synthase, found in Aloe arborescens (Kidachi aloe).